A 522-amino-acid polypeptide reads, in one-letter code: Echinocystic acid 23-monooxygenase (522 aa).

Residues 4 to 24 (LPYIATSIACIVILRWALNMM) traverse the membrane as a helical; Signal-anchor for type II membrane protein segment. A glycan (N-linked (GlcNAc...) asparagine) is linked at Asn-190. Residue Cys-470 participates in heme binding.

It belongs to the cytochrome P450 family. Requires heme as cofactor. Mainly expressed in flowers and flower buds, to a lesser extent in young leaves and, at low levels, in old leaves, stems and roots.

It is found in the membrane. It functions in the pathway secondary metabolite biosynthesis; terpenoid biosynthesis. Functionally, component of the oleanane-type triterpene saponins (e.g. saponarioside A and saponarioside B) biosynthetic pathway, leading to the production of natural products with detergent properties used as traditional sources of soap. An oxidoreductase that facilitates the oxidation of the methyl group to a carboxyl group at the C-23 position of echinocystic acid, resulting in the formation of quillaic acid (QA). The polypeptide is Echinocystic acid 23-monooxygenase (Saponaria officinalis (Common soapwort)).